The sequence spans 955 residues: RNA polymerase-associated protein RapA (955 aa).

Residues 163-333 (EVGHRYAPRV…FARLRLLDPE (171 aa)) form the Helicase ATP-binding domain. 176-183 (DEVGLGKT) serves as a coordination point for ATP. The short motif at 279-282 (DEAH) is the DEAH box element. A Helicase C-terminal domain is found at 478–642 (RVDWLLELLL…AVRDELFELL (165 aa)).

It belongs to the SNF2/RAD54 helicase family. RapA subfamily. As to quaternary structure, interacts with the RNAP. Has a higher affinity for the core RNAP than for the holoenzyme. Its ATPase activity is stimulated by binding to RNAP.

Transcription regulator that activates transcription by stimulating RNA polymerase (RNAP) recycling in case of stress conditions such as supercoiled DNA or high salt concentrations. Probably acts by releasing the RNAP, when it is trapped or immobilized on tightly supercoiled DNA. Does not activate transcription on linear DNA. Probably not involved in DNA repair. The chain is RNA polymerase-associated protein RapA from Aeromonas salmonicida (strain A449).